Here is a 409-residue protein sequence, read N- to C-terminus: Argininosuccinate synthase (409 aa).

ATP is bound by residues 16-24 (AYSGGLDTS) and Ala-44. 2 residues coordinate L-citrulline: Tyr-96 and Ser-101. Gly-126 provides a ligand contact to ATP. L-aspartate is bound by residues Thr-128, Asn-132, and Asp-133. Residue Asn-132 coordinates L-citrulline. Residues Arg-136, Ser-185, Ser-194, Glu-270, and Tyr-282 each coordinate L-citrulline.

Belongs to the argininosuccinate synthase family. Type 1 subfamily. Homotetramer.

The protein localises to the cytoplasm. The enzyme catalyses L-citrulline + L-aspartate + ATP = 2-(N(omega)-L-arginino)succinate + AMP + diphosphate + H(+). It functions in the pathway amino-acid biosynthesis; L-arginine biosynthesis; L-arginine from L-ornithine and carbamoyl phosphate: step 2/3. This Shewanella piezotolerans (strain WP3 / JCM 13877) protein is Argininosuccinate synthase.